Here is a 330-residue protein sequence, read N- to C-terminus: Aspartate--ammonia ligase (330 aa).

The protein belongs to the class-II aminoacyl-tRNA synthetase family. AsnA subfamily.

It is found in the cytoplasm. The enzyme catalyses L-aspartate + NH4(+) + ATP = L-asparagine + AMP + diphosphate + H(+). It functions in the pathway amino-acid biosynthesis; L-asparagine biosynthesis; L-asparagine from L-aspartate (ammonia route): step 1/1. This is Aspartate--ammonia ligase from Streptococcus pyogenes serotype M2 (strain MGAS10270).